Here is a 146-residue protein sequence, read N- to C-terminus: Hemoglobin subunit beta (146 aa).

Valine 1 is modified (N-acetylvaline). The Globin domain maps to 2 to 146; that stretch reads HLTGEEKSAV…VANALAHKYH (145 aa). Residue threonine 12 is modified to Phosphothreonine. Position 44 is a phosphoserine (serine 44). An N6-acetyllysine modification is found at lysine 59. Histidine 63 is a binding site for heme b. Residue lysine 82 is modified to N6-acetyllysine. Residue histidine 92 participates in heme b binding. At cysteine 93 the chain carries S-nitrosocysteine. Lysine 144 carries the N6-acetyllysine modification.

Belongs to the globin family. As to quaternary structure, heterotetramer of two alpha chains and two beta chains. As to expression, red blood cells.

Its function is as follows. Involved in oxygen transport from the lung to the various peripheral tissues. In Loris tardigradus (Slender loris), this protein is Hemoglobin subunit beta (HBB).